The following is a 163-amino-acid chain: Large ribosomal subunit protein uL22c (163 aa).

This sequence belongs to the universal ribosomal protein uL22 family. In terms of assembly, part of the 50S ribosomal subunit.

Its subcellular location is the plastid. The protein localises to the chloroplast. Its function is as follows. This protein binds specifically to 23S rRNA. Functionally, the globular domain of the protein is located near the polypeptide exit tunnel on the outside of the subunit, while an extended beta-hairpin is found that lines the wall of the exit tunnel in the center of the 70S ribosome. In Lobularia maritima (Sweet alyssum), this protein is Large ribosomal subunit protein uL22c (rpl22).